A 575-amino-acid polypeptide reads, in one-letter code: Septation ring formation regulator EzrA (575 aa).

Topologically, residues 1–8 are extracellular; it reads MSNGQLIY. A helical membrane pass occupies residues 9-27; the sequence is LMVAIAVILVLAYVVAIFL. Topologically, residues 28–575 are cytoplasmic; sequence RKRNEGRLEA…YEKTRETIRF (548 aa). Coiled-coil stretches lie at residues 105–191, 265–301, 354–416, and 456–526; these read LKAS…FVTL, LYEA…LYDI, VRRI…IEKD, and TASN…IQEA.

Belongs to the EzrA family.

The protein localises to the cell membrane. In terms of biological role, negative regulator of FtsZ ring formation; modulates the frequency and position of FtsZ ring formation. Inhibits FtsZ ring formation at polar sites. Interacts either with FtsZ or with one of its binding partners to promote depolymerization. The polypeptide is Septation ring formation regulator EzrA (Streptococcus pneumoniae (strain ATCC BAA-255 / R6)).